The chain runs to 233 residues: Type IV secretion system protein PtlE homolog (233 aa).

The chain crosses the membrane as a helical span at residues 42-62 (VAWAALAVTALSLIAIATMLP).

Belongs to the virB8 family.

The protein resides in the cell inner membrane. The polypeptide is Type IV secretion system protein PtlE homolog (ptlE) (Bordetella parapertussis (strain 12822 / ATCC BAA-587 / NCTC 13253)).